Here is a 93-residue protein sequence, read N- to C-terminus: UPF0358 protein BH2626 (93 aa).

It belongs to the UPF0358 family.

The polypeptide is UPF0358 protein BH2626 (Halalkalibacterium halodurans (strain ATCC BAA-125 / DSM 18197 / FERM 7344 / JCM 9153 / C-125) (Bacillus halodurans)).